The chain runs to 205 residues: tRNA 2-(methylsulfanyl)-N(6)-isopentenyladenosine(37) hydroxylase (205 aa).

Residues Glu38, Glu69, His72, Glu122, Glu151, and His154 each contribute to the Fe cation site.

The protein belongs to the MiaE family. Homodimer. It depends on Fe cation as a cofactor.

The catalysed reaction is 2-methylsulfanyl-N(6)-dimethylallyladenosine(37) in tRNA + AH2 + O2 = N(6)-[(2E)-4-hydroxy-3-methylbut-2-en-1-yl]-2-(methylsulfanyl)adenosine(37) in tRNA + A + H2O. Its pathway is tRNA modification; 2-methylthio-N-6-(cis-hydroxy)isopentenyl adenosine-tRNA biosynthesis. Functionally, involved in specific tRNA modification. Catalyzes the oxygen-dependent hydroxylation of 2-methylthio-N-6-isopentenyl adenosine (ms2i6A) to produce 2-methylthio-N-6-(cis-hydroxy)isopentenyl adenosine (ms2io6A) at position 37 in tRNAs. This chain is tRNA 2-(methylsulfanyl)-N(6)-isopentenyladenosine(37) hydroxylase, found in Pseudomonas putida (strain ATCC 47054 / DSM 6125 / CFBP 8728 / NCIMB 11950 / KT2440).